The sequence spans 542 residues: Apolipoprotein N-acyltransferase (542 aa).

Helical transmembrane passes span 24 to 44, 54 to 74, 85 to 105, 116 to 136, 160 to 180, and 190 to 210; these read VVASVVSCICGYSLLWAGLFA, VWCIAFIWTWTVEGAHFSWML, FVWGILLSYLATLFASFSCLV, ALVWLPGVWVAIEAIRYYGLL, FFGWAGQSFLVIAANICCFAV, and GLWLTLCAFPYLLGGAHYEYL. The 280-residue stretch at 220-499 folds into the CN hydrolase domain; that stretch reads LRVAIVQPGY…TGVLQVSVPL (280 aa). Residue Glu-264 is the Proton acceptor of the active site. The active site involves Lys-349. Cys-404 functions as the Nucleophile in the catalytic mechanism. Residues 509-529 form a helical membrane-spanning segment; sequence LGDAPLLLIAVCSVIGAIAYF.

This sequence belongs to the CN hydrolase family. Apolipoprotein N-acyltransferase subfamily.

The protein localises to the cell inner membrane. The catalysed reaction is N-terminal S-1,2-diacyl-sn-glyceryl-L-cysteinyl-[lipoprotein] + a glycerophospholipid = N-acyl-S-1,2-diacyl-sn-glyceryl-L-cysteinyl-[lipoprotein] + a 2-acyl-sn-glycero-3-phospholipid + H(+). It functions in the pathway protein modification; lipoprotein biosynthesis (N-acyl transfer). In terms of biological role, catalyzes the phospholipid dependent N-acylation of the N-terminal cysteine of apolipoprotein, the last step in lipoprotein maturation. The protein is Apolipoprotein N-acyltransferase of Chlamydia trachomatis serovar D (strain ATCC VR-885 / DSM 19411 / UW-3/Cx).